The chain runs to 431 residues: MSTIVSVWAREILDSRGNPTVEVEVSLESGHSGRAAVPSGASTGSREALELRDGDKGRYLGKGVEKAVDNVMGEIAENIVGMDALRQVAVDNALIDLDGTDNKDRLGANAMLGVSLATARAAANFIGMPLYQYLGGINSKVLPVPMMNIINGGEHAPNNLDIQEFMIMPVGAPTFSEALRMGAEIFHNLKALLAADGHVTSVGDEGGFAPNLKSHDEAFRYIMRAIETAGYIPGSEVALAIDAAASEFYKDGKYHLKGENKVLSSSEMIDWLMDFTQRYPLISIEDGMAEGDWEGWQEMTVKMGDSVQIVGDDVFVTNPDILAQGIDEGVANSILIKLNQIGTLTETLDTVEMAKGAGYTTVISHRSGETEDHFIADLAVALNAGQIKTGSLCRSDRLAKYNQLLRIEEDLDDEGIYFGPYMASHFGLGEE.

The segment at Leu-27–Glu-47 is disordered. Residue Gln-163 coordinates (2R)-2-phosphoglycerate. Glu-205 acts as the Proton donor in catalysis. Positions 242, 285, and 312 each coordinate Mg(2+). (2R)-2-phosphoglycerate contacts are provided by Lys-337, Arg-366, Ser-367, and Lys-388. Lys-337 functions as the Proton acceptor in the catalytic mechanism.

Belongs to the enolase family. Mg(2+) serves as cofactor.

It localises to the cytoplasm. Its subcellular location is the secreted. The protein resides in the cell surface. The catalysed reaction is (2R)-2-phosphoglycerate = phosphoenolpyruvate + H2O. Its pathway is carbohydrate degradation; glycolysis; pyruvate from D-glyceraldehyde 3-phosphate: step 4/5. Catalyzes the reversible conversion of 2-phosphoglycerate (2-PG) into phosphoenolpyruvate (PEP). It is essential for the degradation of carbohydrates via glycolysis. The protein is Enolase of Oleidesulfovibrio alaskensis (strain ATCC BAA-1058 / DSM 17464 / G20) (Desulfovibrio alaskensis).